The chain runs to 340 residues: Cytochrome P450 monooxygenase cheG (340 aa).

N-linked (GlcNAc...) asparagine glycosylation is present at N25. A helical membrane pass occupies residues 37–57 (MLLGIPTVILSLTPAVLRLLI). C283 contacts heme. Residues 308-340 (LPPGQGKPEKGSMPNGSMSPDTKAKVLFRSRKL) are disordered. Residue N322 is glycosylated (N-linked (GlcNAc...) asparagine).

This sequence belongs to the cytochrome P450 family. It depends on heme as a cofactor.

Its subcellular location is the membrane. Its pathway is secondary metabolite biosynthesis. In terms of biological role, cytochrome P450 monooxygenase; part of the gene cluster that mediates the biosynthesis of chaetoglobosin A which has a unique inhibitory activity against actin polymerization in mammalian cells. Chaetoglobosin A and its intermediates are involved in the morphological differentiation of C.globosum. The first step of the pathway is the synthesis of prochaetoglobosin I via condensation of one acetyl-CoA, 8 malonyl-CoA, and a L-tryptophan molecule by the PKS-NRPS hybrid synthetase cheA, followed by reduction of backbone double bond to install desired geometry by the enoyl reductase cheB. Further multiple oxidation steps performed by the cytochrome P450 monooxygenases cheE and cheG, as well as by the FAD-linked oxidoreductase cheF, lead to the formation of chaetoglobosin A. Depending on the order of action of these reductases, distinct intermediates can be identified. Within the pathway, the cytochrome P450 monooxygenase cheE catalyzes a stereospecific epoxidation on prochaetoglobosin I, cytoglobosin D, and chaetoglobosin J intermediates. The FAD-linked oxidoreductase cheF performs dehydrogenation of the C-20 hydroxyl groups in the 20-dihyrochaetoglobosin A and cytoglobosin D intermediates. Finally, the cytochrome P450 monooxygenase cheG can catalyze the stereospecific dihydroxylation of prochaetoglobosin I and prochaetoglobosin IV at C-19 and C-20, respectively. The Diels-Alderase cheD may play a role in the post-PKS-NRPS biosynthetic steps catalyzing Diels-Alder cyclization. This chain is Cytochrome P450 monooxygenase cheG, found in Chaetomium globosum (strain ATCC 6205 / CBS 148.51 / DSM 1962 / NBRC 6347 / NRRL 1970) (Soil fungus).